The chain runs to 283 residues: Bifunctional protein FolD (283 aa).

NADP(+) contacts are provided by residues 163–165, serine 188, and isoleucine 229; that span reads GRS.

This sequence belongs to the tetrahydrofolate dehydrogenase/cyclohydrolase family. As to quaternary structure, homodimer.

The catalysed reaction is (6R)-5,10-methylene-5,6,7,8-tetrahydrofolate + NADP(+) = (6R)-5,10-methenyltetrahydrofolate + NADPH. It carries out the reaction (6R)-5,10-methenyltetrahydrofolate + H2O = (6R)-10-formyltetrahydrofolate + H(+). The protein operates within one-carbon metabolism; tetrahydrofolate interconversion. Catalyzes the oxidation of 5,10-methylenetetrahydrofolate to 5,10-methenyltetrahydrofolate and then the hydrolysis of 5,10-methenyltetrahydrofolate to 10-formyltetrahydrofolate. The polypeptide is Bifunctional protein FolD (Campylobacter concisus (strain 13826)).